Reading from the N-terminus, the 206-residue chain is MEENKLKFNLQFFADQSDDPDEPGGDGKKGNPDKKENDEGTEITFTPEQQKKVDEILERRVAHEKKKADEYAKEKAAEAAKEAAKLAKMNKDQKDEYEREQMEKELEQLRSEKQLNEMRSEARKMLSEAEVDSSDEVVNLVVTDTAEQTKSNVEAFSNAVKKAVNEAVKVNARQSPLTGGDSFNHSTKNKPQNLAEIARQKRIIKN.

A propeptide spanning residues 1–13 is cleaved from the precursor; that stretch reads MEENKLKFNLQFF. 3 disordered regions span residues 1 to 50, 83 to 134, and 173 to 206; these read MEEN…PEQQ, AAKL…VDSS, and RQSPLTGGDSFNHSTKNKPQNLAEIARQKRIIKN. 2 stretches are compositionally biased toward basic and acidic residues: residues 25–38 and 83–127; these read GDGKKGNPDKKEND and AAKL…KMLS. Residues 173 to 192 are compositionally biased toward polar residues; the sequence is RQSPLTGGDSFNHSTKNKPQ. Residues 186–206 are helix-and-hook motif; that stretch reads STKNKPQNLAEIARQKRIIKN.

As to quaternary structure, found in the procapsid with the major capsid protein in a 2:1 capsid protein:scaffold protein molecular ratio. The N-terminus is cleaved by ribosomal processing protease Prp.

Scaffolding protein involved in icosahedric procapsid assembly. Coassembles with capsid protein(s) to form the procapsid. The scaffolding protein is found within the capsid as a series of concentric shells. During DNA packaging, the scaffolding protein molecules are released from the procapsid. The polypeptide is Capsid assembly scaffolding protein (Staphylococcus phage 80alpha).